A 418-amino-acid polypeptide reads, in one-letter code: MFSPKIIILSTGSELTSGRSQDTNSSWIANELFGIGFTVSKLVVLPDDPEAILEELRTLVSLATKKNPVLLIMTGGLGPTEDDYTLEVVCKLKGVSSVESVVARQRIEAFYKLRGKNFQESLQTAIRQISVPKDSTILNNEVGIAPGFIVSLGENAHLGCMPGVPGEMTEMFREEFSTWILKKYSTRELHSGFRFIWWMSESQFQKEFISKEESVTSEKVIWGVAAKRGYIRVSFQSNERALVDFLLKKLDEIYGPKSTLDVFEELPKLLIEKKITVGTAESCTGGLISKIFTDKPGSSTYFYGGVISYDNGVKEGILGVKKNTLKEFGAVSMETAKEMAEGALVALGVDYSISVTGIAGPGGGTPQKKVGLVYFGIGQKNEKTETHEHYFPFPRSSFREFAAHTGIYLLYNRLKRLA.

It belongs to the CinA family.

In Leptospira interrogans serogroup Icterohaemorrhagiae serovar Lai (strain 56601), this protein is CinA-like protein.